A 334-amino-acid polypeptide reads, in one-letter code: Malate dehydrogenase, cytoplasmic (334 aa).

NAD(+) is bound at residue 11–17 (GAAGQIA). The substrate site is built by Arg92 and Arg98. NAD(+) is bound by residues Asn105, Gln112, and 129 to 131 (VGN). Residues Asn131 and Arg162 each coordinate substrate. Residue His187 is the Proton acceptor of the active site.

Belongs to the LDH/MDH superfamily. MDH type 2 family. In terms of assembly, homodimer.

The protein resides in the cytoplasm. It is found in the cytosol. It carries out the reaction (S)-malate + NAD(+) = oxaloacetate + NADH + H(+). It catalyses the reaction (S)-2-hydroxyglutarate + NAD(+) = 2-oxoglutarate + NADH + H(+). Its function is as follows. Catalyzes the reduction of aromatic alpha-keto acids in the presence of NADH. Plays essential roles in the malate-aspartate shuttle and the tricarboxylic acid cycle, important in mitochondrial NADH supply for oxidative phosphorylation. Catalyzes the reduction of 2-oxoglutarate to 2-hydroxyglutarate, leading to elevated reactive oxygen species (ROS). This is Malate dehydrogenase, cytoplasmic (MDH1) from Gallus gallus (Chicken).